We begin with the raw amino-acid sequence, 346 residues long: Biotin synthase (346 aa).

Residues 38–256 (RQVQVSTLLS…IAVARIMMPT (219 aa)) enclose the Radical SAM core domain. Cysteine 53, cysteine 57, and cysteine 60 together coordinate [4Fe-4S] cluster. Residues cysteine 97, cysteine 128, cysteine 188, and arginine 260 each contribute to the [2Fe-2S] cluster site.

This sequence belongs to the radical SAM superfamily. Biotin synthase family. Homodimer. Requires [4Fe-4S] cluster as cofactor. [2Fe-2S] cluster is required as a cofactor.

It catalyses the reaction (4R,5S)-dethiobiotin + (sulfur carrier)-SH + 2 reduced [2Fe-2S]-[ferredoxin] + 2 S-adenosyl-L-methionine = (sulfur carrier)-H + biotin + 2 5'-deoxyadenosine + 2 L-methionine + 2 oxidized [2Fe-2S]-[ferredoxin]. It functions in the pathway cofactor biosynthesis; biotin biosynthesis; biotin from 7,8-diaminononanoate: step 2/2. Catalyzes the conversion of dethiobiotin (DTB) to biotin by the insertion of a sulfur atom into dethiobiotin via a radical-based mechanism. This Escherichia fergusonii (strain ATCC 35469 / DSM 13698 / CCUG 18766 / IAM 14443 / JCM 21226 / LMG 7866 / NBRC 102419 / NCTC 12128 / CDC 0568-73) protein is Biotin synthase.